A 225-amino-acid chain; its full sequence is 2-phytyl-1,4-naphtoquinone methyltransferase (225 aa).

Belongs to the class I-like SAM-binding methyltransferase superfamily. MenG/UbiE family.

The enzyme catalyses demethylphylloquinol + S-adenosyl-L-methionine = phylloquinol + S-adenosyl-L-homocysteine + H(+). It participates in cofactor biosynthesis; phylloquinone biosynthesis. Its function is as follows. Methyltransferase required for the conversion of 2-phytyl-1,4-beta-naphthoquinol to phylloquinol. This chain is 2-phytyl-1,4-naphtoquinone methyltransferase, found in Thermosynechococcus vestitus (strain NIES-2133 / IAM M-273 / BP-1).